Here is a 993-residue protein sequence, read N- to C-terminus: Type II inositol 1,4,5-trisphosphate 5-phosphatase (993 aa).

The PH domain maps to 22-148; it reads QGVLCKGDSR…PEFEWLSRHT (127 aa). Basic and acidic residues-rich tracts occupy residues 149–163 and 294–303; these read CAEPDAESPKPREWN and SKSDMSEKVR. 2 disordered regions span residues 149-191 and 236-304; these read CAEP…GLED and EALE…KVRS. Residues 342–668 are 5-phosphatase; that stretch reads IQNFRFFVGT…LDKMENANIP (327 aa). Asparagine 355 and glutamate 383 together coordinate Mg(2+). Substrate is bound by residues glutamate 383, 459–460, 582–583, and 596–598; these read NK, YK, and KCR. The interval 669–782 is ASH; it reads SVTLSKREFC…LSVSGNYLPS (114 aa). Residues 821-993 form the Rho-GAP domain; it reads SQLENPMEIP…FIHQFLCGPL (173 aa). Cysteine 990 bears the Cysteine methyl ester mark. A lipid anchor (S-farnesyl cysteine) is attached at cysteine 990. The propeptide at 991–993 is removed in mature form; that stretch reads GPL.

This sequence belongs to the inositol 1,4,5-trisphosphate 5-phosphatase type II family. In terms of assembly, interacts with APPL1, PHETA1 and PHETA2. Interacts with several Rab GTPases, at least RAB1A, RAB2A, RAB5A, RAB6A, RAB8A, RAB9A and RAB33B; these interactions may play a dual role in targeting INPP5B to the specific membranes and stimulating its phosphatase activity. Interacts preferentially with non-phosphorylated RAB8A; phosphorylation of RAB8A on 'Thr-72' disrupts this interaction. Interacts with INPP5F. In terms of processing, isoprenylation at Cys-990 may be required for localization at the membrane. Post-translationally, may be proteolytically cleaved after Lys-320 as inferred from N-terminal protein sequence of the 75 kda form. As to expression, detected in kidney, liver, brain, lung and testis (at protein level). Detected in kidney and liver, and at lower levels in brain, lung and testis.

It localises to the cytoplasm. The protein localises to the cytosol. The protein resides in the endoplasmic reticulum-Golgi intermediate compartment. It is found in the early endosome membrane. Its subcellular location is the membrane. It localises to the cytoplasmic vesicle. The protein localises to the phagosome membrane. The enzyme catalyses a 1,2-diacyl-sn-glycero-3-phospho-(1D-myo-inositol-4,5-bisphosphate) + H2O = a 1,2-diacyl-sn-glycero-3-phospho-(1D-myo-inositol 4-phosphate) + phosphate. Hydrolyzes phosphatidylinositol 4,5-bisphosphate (PtIns(4,5)P2) and the signaling molecule phosphatidylinositol 1,4,5-trisphosphate (PtIns(1,4,5)P3), and thereby modulates cellular signaling events. This chain is Type II inositol 1,4,5-trisphosphate 5-phosphatase (Inpp5b), found in Mus musculus (Mouse).